A 59-amino-acid polypeptide reads, in one-letter code: MLSWALIFFIIAIIAAAFGFGGIAVAAAGIAKILFFLFLVMFVIFLIMGLLGRRGPPPV.

The next 2 helical transmembrane spans lie at 5-25 (ALIF…GIAV) and 30-50 (IAKI…IMGL).

It belongs to the UPF0391 family.

The protein localises to the cell membrane. This Legionella pneumophila subsp. pneumophila (strain Philadelphia 1 / ATCC 33152 / DSM 7513) protein is UPF0391 membrane protein lpg2521.